The chain runs to 300 residues: Acetylglutamate kinase (300 aa).

Residues 68 to 69 (GG), arginine 90, and asparagine 195 each bind substrate.

The protein belongs to the acetylglutamate kinase family. ArgB subfamily.

It is found in the cytoplasm. The catalysed reaction is N-acetyl-L-glutamate + ATP = N-acetyl-L-glutamyl 5-phosphate + ADP. It participates in amino-acid biosynthesis; L-arginine biosynthesis; N(2)-acetyl-L-ornithine from L-glutamate: step 2/4. Functionally, catalyzes the ATP-dependent phosphorylation of N-acetyl-L-glutamate. This chain is Acetylglutamate kinase, found in Stutzerimonas stutzeri (strain A1501) (Pseudomonas stutzeri).